Reading from the N-terminus, the 372-residue chain is 4-hydroxy-3-methylbut-2-en-1-yl diphosphate synthase (flavodoxin) (372 aa).

Residues C270, C273, C305, and E312 each contribute to the [4Fe-4S] cluster site.

It belongs to the IspG family. It depends on [4Fe-4S] cluster as a cofactor.

The catalysed reaction is (2E)-4-hydroxy-3-methylbut-2-enyl diphosphate + oxidized [flavodoxin] + H2O + 2 H(+) = 2-C-methyl-D-erythritol 2,4-cyclic diphosphate + reduced [flavodoxin]. Its pathway is isoprenoid biosynthesis; isopentenyl diphosphate biosynthesis via DXP pathway; isopentenyl diphosphate from 1-deoxy-D-xylulose 5-phosphate: step 5/6. In terms of biological role, converts 2C-methyl-D-erythritol 2,4-cyclodiphosphate (ME-2,4cPP) into 1-hydroxy-2-methyl-2-(E)-butenyl 4-diphosphate. The polypeptide is 4-hydroxy-3-methylbut-2-en-1-yl diphosphate synthase (flavodoxin) (Escherichia coli O8 (strain IAI1)).